The following is a 249-amino-acid chain: Beta-crystallin B1 (249 aa).

The tract at residues 1-49 is disordered; sequence MSQPAVKASATAAVNPGPDGKGKGAPPPGPAPGSGPAQAPAQPMPAAKG. An N-acetylserine modification is found at S2. Residues 2–55 are N-terminal arm; the sequence is SQPAVKASATAAVNPGPDGKGKGAPPPGPAPGSGPAQAPAQPMPAAKGDLPPGS. Over residues 34-49 the composition is skewed to low complexity; it reads SGPAQAPAQPMPAAKG. 2 Beta/gamma crystallin 'Greek key' domains span residues 56 to 95 and 96 to 140; these read YKLV…IVTS and GPWV…RPIR. Residues 141–145 form a connecting peptide region; the sequence is MDAQE. Beta/gamma crystallin 'Greek key' domains lie at 146 to 187 and 188 to 230; these read HKLC…RVSS and GTWV…RRLR. The segment at 232–249 is C-terminal arm; sequence RQWHREGCFPVLAAEPPK.

This sequence belongs to the beta/gamma-crystallin family. Homo/heterodimer, or complexes of higher-order. The structure of beta-crystallin oligomers seems to be stabilized through interactions between the N-terminal arms. Specific cleavages in the N-terminal arm occur during lens maturation and give rise to truncated forms, leading to impaired oligomerization and protein insolubilization.

Functionally, crystallins are the dominant structural components of the vertebrate eye lens. The polypeptide is Beta-crystallin B1 (CRYBB1) (Sus scrofa (Pig)).